The sequence spans 257 residues: NAD-capped RNA hydrolase NudC (257 aa).

Substrate-binding residues include Lys-25 and Arg-69. 2 residues coordinate Zn(2+): Cys-98 and Cys-101. Glu-111 contacts substrate. 2 residues coordinate Zn(2+): Cys-116 and Cys-119. Substrate is bound at residue Tyr-124. The Nudix hydrolase domain occupies 125-248 (PQIAPCIIVA…TVARRLIEDT (124 aa)). Residues Ala-158, Glu-174, and Glu-178 each coordinate a divalent metal cation. The Nudix box signature appears at 159-180 (GFVEVGETLEQAVAREVMEESG). 192-199 (QPWPFPQS) serves as a coordination point for substrate. Glu-219 is a binding site for a divalent metal cation. Position 241 (Ala-241) interacts with substrate.

Belongs to the Nudix hydrolase family. NudC subfamily. As to quaternary structure, homodimer. Requires Mg(2+) as cofactor. The cofactor is Mn(2+). Zn(2+) is required as a cofactor.

The catalysed reaction is a 5'-end NAD(+)-phospho-ribonucleoside in mRNA + H2O = a 5'-end phospho-adenosine-phospho-ribonucleoside in mRNA + beta-nicotinamide D-ribonucleotide + 2 H(+). It catalyses the reaction NAD(+) + H2O = beta-nicotinamide D-ribonucleotide + AMP + 2 H(+). It carries out the reaction NADH + H2O = reduced beta-nicotinamide D-ribonucleotide + AMP + 2 H(+). In terms of biological role, mRNA decapping enzyme that specifically removes the nicotinamide adenine dinucleotide (NAD) cap from a subset of mRNAs by hydrolyzing the diphosphate linkage to produce nicotinamide mononucleotide (NMN) and 5' monophosphate mRNA. The NAD-cap is present at the 5'-end of some mRNAs and stabilizes RNA against 5'-processing. Has preference for mRNAs with a 5'-end purine. Catalyzes the hydrolysis of a broad range of dinucleotide pyrophosphates. The chain is NAD-capped RNA hydrolase NudC from Shigella dysenteriae serotype 1 (strain Sd197).